Reading from the N-terminus, the 391-residue chain is Phosphoglycerate kinase (391 aa).

Residues 21-23 (DLN), Arg36, 59-62 (HLGR), Arg113, and Arg146 each bind substrate. Residues Lys197, Glu319, and 345–348 (GGDT) contribute to the ATP site.

This sequence belongs to the phosphoglycerate kinase family. As to quaternary structure, monomer.

Its subcellular location is the cytoplasm. The catalysed reaction is (2R)-3-phosphoglycerate + ATP = (2R)-3-phospho-glyceroyl phosphate + ADP. The protein operates within carbohydrate degradation; glycolysis; pyruvate from D-glyceraldehyde 3-phosphate: step 2/5. The sequence is that of Phosphoglycerate kinase from Xanthomonas euvesicatoria pv. vesicatoria (strain 85-10) (Xanthomonas campestris pv. vesicatoria).